A 126-amino-acid polypeptide reads, in one-letter code: Small ribosomal subunit protein bS6 (126 aa).

A disordered region spans residues 101–126; the sequence is VMMKAKEERSAKREDAAPRAEEAAAE. A compositionally biased stretch (basic and acidic residues) spans 104 to 126; that stretch reads KAKEERSAKREDAAPRAEEAAAE.

It belongs to the bacterial ribosomal protein bS6 family.

Functionally, binds together with bS18 to 16S ribosomal RNA. The polypeptide is Small ribosomal subunit protein bS6 (Aliivibrio fischeri (strain ATCC 700601 / ES114) (Vibrio fischeri)).